The following is a 341-amino-acid chain: UDP-3-O-acylglucosamine N-acyltransferase (341 aa).

The active-site Proton acceptor is the histidine 239.

It belongs to the transferase hexapeptide repeat family. LpxD subfamily. As to quaternary structure, homotrimer.

The catalysed reaction is a UDP-3-O-[(3R)-3-hydroxyacyl]-alpha-D-glucosamine + a (3R)-hydroxyacyl-[ACP] = a UDP-2-N,3-O-bis[(3R)-3-hydroxyacyl]-alpha-D-glucosamine + holo-[ACP] + H(+). It functions in the pathway bacterial outer membrane biogenesis; LPS lipid A biosynthesis. Functionally, catalyzes the N-acylation of UDP-3-O-acylglucosamine using 3-hydroxyacyl-ACP as the acyl donor. Is involved in the biosynthesis of lipid A, a phosphorylated glycolipid that anchors the lipopolysaccharide to the outer membrane of the cell. The sequence is that of UDP-3-O-acylglucosamine N-acyltransferase from Shewanella oneidensis (strain ATCC 700550 / JCM 31522 / CIP 106686 / LMG 19005 / NCIMB 14063 / MR-1).